We begin with the raw amino-acid sequence, 115 residues long: NADH-ubiquinone oxidoreductase chain 3 (115 aa).

3 helical membrane-spanning segments follow: residues 4–24, 55–75, and 86–106; these read IMVI…AFWL, FFLV…LLPI, and TMML…AYEW.

It belongs to the complex I subunit 3 family. Core subunit of respiratory chain NADH dehydrogenase (Complex I) which is composed of 45 different subunits. Interacts with TMEM186. Interacts with TMEM242.

It is found in the mitochondrion inner membrane. It carries out the reaction a ubiquinone + NADH + 5 H(+)(in) = a ubiquinol + NAD(+) + 4 H(+)(out). Functionally, core subunit of the mitochondrial membrane respiratory chain NADH dehydrogenase (Complex I) which catalyzes electron transfer from NADH through the respiratory chain, using ubiquinone as an electron acceptor. Essential for the catalytic activity of complex I. This is NADH-ubiquinone oxidoreductase chain 3 from Baiomys taylori (Northern pygmy mouse).